Consider the following 290-residue polypeptide: Elongation factor Ts, mitochondrial 1 (290 aa).

This sequence belongs to the EF-Ts family.

The protein localises to the mitochondrion. Functionally, associates with the EF-Tu.GDP complex and induces the exchange of GDP to GTP. It remains bound to the aminoacyl-tRNA.EF-Tu.GTP complex up to the GTP hydrolysis stage on the ribosome. This chain is Elongation factor Ts, mitochondrial 1, found in Postia placenta (strain ATCC 44394 / Madison 698-R) (Brown rot fungus).